The following is a 779-amino-acid chain: Translation initiation factor IF-2 (779 aa).

The disordered stretch occupies residues Arg-44 to Glu-193. The segment covering Thr-53 to Thr-65 has biased composition (basic and acidic residues). Over residues Ser-66–Thr-81 the composition is skewed to polar residues. Composition is skewed to low complexity over residues Asn-82–Pro-93 and Ala-117–Gly-167. The region spanning Glu-280–Lys-449 is the tr-type G domain. The segment at Gly-289 to Thr-296 is G1. Position 289 to 296 (Gly-289 to Thr-296) interacts with GTP. Residues Gly-314–His-318 form a G2 region. Positions Asp-335 to Gly-338 are G3. Residues Asp-335–His-339 and Asn-389–Asp-392 each bind GTP. Residues Asn-389–Asp-392 are G4. The segment at Ser-425–Lys-427 is G5.

It belongs to the TRAFAC class translation factor GTPase superfamily. Classic translation factor GTPase family. IF-2 subfamily.

It is found in the cytoplasm. In terms of biological role, one of the essential components for the initiation of protein synthesis. Protects formylmethionyl-tRNA from spontaneous hydrolysis and promotes its binding to the 30S ribosomal subunits. Also involved in the hydrolysis of GTP during the formation of the 70S ribosomal complex. In Listeria monocytogenes serovar 1/2a (strain ATCC BAA-679 / EGD-e), this protein is Translation initiation factor IF-2.